Reading from the N-terminus, the 751-residue chain is Meiotic sister-chromatid recombination protein 3 (751 aa).

Disordered stretches follow at residues 54 to 88, 216 to 290, 314 to 410, 431 to 504, and 558 to 610; these read GVGM…RTYS, LRAP…KKQM, PALE…EARF, TQEN…RPSF, and KDVP…SPPQ. A compositionally biased stretch (low complexity) spans 216-228; that stretch reads LRAPPRVQQQRQL. Composition is skewed to basic and acidic residues over residues 345–356 and 384–393; these read ERSRPAKREVRK and ERVHNKEKTL. Over residues 431–496 the composition is skewed to polar residues; it reads TQENSTRDNG…GCETGNTTPK (66 aa). Residues 596–609 show a composition bias toward low complexity; the sequence is RSSISSSPRRSSPP.

It is found in the cell membrane. In terms of biological role, may be involved in the control of meiotic sister-chromatid recombination. This chain is Meiotic sister-chromatid recombination protein 3 (MSC3), found in Eremothecium gossypii (strain ATCC 10895 / CBS 109.51 / FGSC 9923 / NRRL Y-1056) (Yeast).